The chain runs to 135 residues: Fatty acid-binding protein 5 (135 aa).

The residue at position 2 (Ala2) is an N-acetylalanine. A Phosphoserine modification is found at Ser3. Residues 24–34 carry the Nuclear localization signal motif; it reads KELGVGLALRK. Residues Cys43 and Arg109 each coordinate N-eicosanoyl ethanolamine. A disulfide bond links Cys120 and Cys127. 129–131 is a binding site for (9Z,12Z)-octadecadienoate; it reads RVY. Tyr131 lines the N-eicosanoyl ethanolamine pocket. Tyr131 contributes to the hexadecanoate binding site. Phosphotyrosine is present on Tyr131.

It belongs to the calycin superfamily. Fatty-acid binding protein (FABP) family. As to quaternary structure, monomer.

It is found in the cytoplasm. It localises to the nucleus. The protein resides in the synapse. Its subcellular location is the postsynaptic density. The protein localises to the secreted. The catalysed reaction is hexadecanoate(out) = hexadecanoate(in). It catalyses the reaction (9Z,12Z)-octadecadienoate(out) = (9Z,12Z)-octadecadienoate(in). The enzyme catalyses (9Z)-octadecenoate(out) = (9Z)-octadecenoate(in). Intracellular carrier for long-chain fatty acids and related active lipids, such as endocannabinoids, that regulate the metabolism and actions of the ligands they bind. In addition to the cytosolic transport, selectively delivers specific fatty acids from the cytosol to the nucleus, wherein they activate nuclear receptors. Delivers retinoic acid to the nuclear receptor peroxisome proliferator-activated receptor delta; which promotes proliferation and survival. May also serve as a synaptic carrier of endocannabinoid at central synapses and thus controls retrograde endocannabinoid signaling. Modulates inflammation by regulating PTGES induction via NF-kappa-B activation, and prostaglandin E2 (PGE2) biosynthesis during inflammation. The chain is Fatty acid-binding protein 5 from Rattus norvegicus (Rat).